Consider the following 131-residue polypeptide: Phosphoribosyl-ATP pyrophosphatase 2 (131 aa).

A disordered region spans residues 105–131; that stretch reads RIGKPAAPHATRRPVIPQEARAVRKHR.

It belongs to the PRA-PH family.

The protein localises to the cytoplasm. It carries out the reaction 1-(5-phospho-beta-D-ribosyl)-ATP + H2O = 1-(5-phospho-beta-D-ribosyl)-5'-AMP + diphosphate + H(+). The protein operates within amino-acid biosynthesis; L-histidine biosynthesis; L-histidine from 5-phospho-alpha-D-ribose 1-diphosphate: step 2/9. The sequence is that of Phosphoribosyl-ATP pyrophosphatase 2 (hisE2) from Rhodopseudomonas palustris (strain ATCC BAA-98 / CGA009).